The primary structure comprises 573 residues: F-box/WD repeat-containing protein 5 (573 aa).

One can recognise an F-box domain in the interval Glu-3–Gln-49. One copy of the WD 1 repeat lies at Glu-90 to His-129. Ser-151 is subject to Phosphoserine; by PLK4. The D-box motif lies at Arg-308–Asp-316. 2 WD repeats span residues Thr-470–Lys-509 and Arg-511–Gln-551.

It belongs to the FBXW5 family. As to quaternary structure, part of the SCF (SKP1-CUL1-F-box) E3 ubiquitin-protein ligase complex SCF(FBXW5) composed of CUL1, SKP1, RBX1 and FBXW5. Component of the DCX(FBXW5) E3 ubiquitin ligase complex, at least composed of (CUL4A or CUL4B), DDB1, FBXW5 and RBX1. Interacts with CDC20, TSC1, TSC2 and SASS6. Interacts with EPS8. Interacts with TNFAIP8L1; TNFAIP8L1 competes with TSC2 to bind FBXW5 increasing TSC2 stability by preventing its ubiquitination. Post-translationally, phosphorylated at Ser-151 by PLK4 during the G1/S transition, leading to inhibit its ability to ubiquitinate SASS6. In terms of processing, ubiquitinated and degraded by the APC/C complex during mitosis and G1 phase. As to expression, widely expressed in adult and embryonal tissues.

It is found in the cytoplasm. Its pathway is protein modification; protein ubiquitination. In terms of biological role, substrate recognition component of both SCF (SKP1-CUL1-F-box protein) and DCX (DDB1-CUL4-X-box) E3 ubiquitin-protein ligase complexes. Substrate-specific adapter of the DCX(FBXW5) E3 ubiquitin-protein ligase complex which mediates the polyubiquitination and subsequent degradation of TSC2. May also act as a negative regulator of MAP3K7/TAK1 signaling in the interleukin-1B (IL1B) signaling pathway. Substrate recognition component of the SCF(FBXW5) E3 ubiquitin-protein ligase complex which mediates the ubiquitination and subsequent proteasomal degradation of SASS6 during S phase, leading to prevent centriole reduplication. The SCF(FBXW5) complex also mediates ubiquitination and degradation of actin-regulator EPS8 during G2 phase, leading to the transient degradation of EPS8 and subsequent cell shape changes required to allow mitotic progression. This is F-box/WD repeat-containing protein 5 (Fbxw5) from Mus musculus (Mouse).